The chain runs to 134 residues: Putative STAG3-like protein 2 (134 aa).

The 86-residue stretch at 10–95 (PKVTCRDVLP…GRFKDWMVSM (86 aa)) folds into the SCD domain.

Belongs to the SCC3 family.

Its subcellular location is the nucleus. In Homo sapiens (Human), this protein is Putative STAG3-like protein 2 (STAG3L2).